The chain runs to 253 residues: Triosephosphate isomerase (253 aa).

Position 9 to 11 (9 to 11) interacts with substrate; sequence NWK. The active-site Electrophile is H97. E169 (proton acceptor) is an active-site residue. Residues G175, S215, and 236–237 each bind substrate; that span reads GG.

Belongs to the triosephosphate isomerase family. Homodimer.

The protein localises to the cytoplasm. The catalysed reaction is D-glyceraldehyde 3-phosphate = dihydroxyacetone phosphate. The protein operates within carbohydrate biosynthesis; gluconeogenesis. It functions in the pathway carbohydrate degradation; glycolysis; D-glyceraldehyde 3-phosphate from glycerone phosphate: step 1/1. Its function is as follows. Involved in the gluconeogenesis. Catalyzes stereospecifically the conversion of dihydroxyacetone phosphate (DHAP) to D-glyceraldehyde-3-phosphate (G3P). The polypeptide is Triosephosphate isomerase (Staphylococcus saprophyticus subsp. saprophyticus (strain ATCC 15305 / DSM 20229 / NCIMB 8711 / NCTC 7292 / S-41)).